The following is a 394-amino-acid chain: 1-deoxy-D-xylulose 5-phosphate reductoisomerase (394 aa).

NADPH contacts are provided by T12, G13, S14, I15, K39, Q40, and N126. 1-deoxy-D-xylulose 5-phosphate is bound at residue K127. E128 provides a ligand contact to NADPH. Residue D152 participates in Mn(2+) binding. 1-deoxy-D-xylulose 5-phosphate contacts are provided by S153, E154, S183, and H206. E154 is a binding site for Mn(2+). G212 is a binding site for NADPH. Positions 219, 224, 225, and 228 each coordinate 1-deoxy-D-xylulose 5-phosphate. E228 provides a ligand contact to Mn(2+).

Belongs to the DXR family. Mg(2+) is required as a cofactor. The cofactor is Mn(2+).

It catalyses the reaction 2-C-methyl-D-erythritol 4-phosphate + NADP(+) = 1-deoxy-D-xylulose 5-phosphate + NADPH + H(+). Its pathway is isoprenoid biosynthesis; isopentenyl diphosphate biosynthesis via DXP pathway; isopentenyl diphosphate from 1-deoxy-D-xylulose 5-phosphate: step 1/6. In terms of biological role, catalyzes the NADPH-dependent rearrangement and reduction of 1-deoxy-D-xylulose-5-phosphate (DXP) to 2-C-methyl-D-erythritol 4-phosphate (MEP). This Neisseria meningitidis serogroup B (strain ATCC BAA-335 / MC58) protein is 1-deoxy-D-xylulose 5-phosphate reductoisomerase.